Consider the following 149-residue polypeptide: UPF0178 protein Psyc_0274 (149 aa).

The protein belongs to the UPF0178 family.

The chain is UPF0178 protein Psyc_0274 from Psychrobacter arcticus (strain DSM 17307 / VKM B-2377 / 273-4).